The primary structure comprises 221 residues: Orotidine 5'-phosphate decarboxylase (221 aa).

Substrate is bound by residues D12, K34, 60–69 (DFKVADIPNT), S117, 170–180 (PGVGAQGGKAS), G193, and R194. K62 (proton donor) is an active-site residue.

This sequence belongs to the OMP decarboxylase family. Type 1 subfamily. Homodimer.

The catalysed reaction is orotidine 5'-phosphate + H(+) = UMP + CO2. It participates in pyrimidine metabolism; UMP biosynthesis via de novo pathway; UMP from orotate: step 2/2. Its function is as follows. Catalyzes the decarboxylation of orotidine 5'-monophosphate (OMP) to uridine 5'-monophosphate (UMP). This chain is Orotidine 5'-phosphate decarboxylase, found in Methanosarcina acetivorans (strain ATCC 35395 / DSM 2834 / JCM 12185 / C2A).